A 350-amino-acid chain; its full sequence is Putative aminopeptidase MJ0555 (350 aa).

Residues histidine 62 and aspartate 175 each coordinate a divalent metal cation. The active-site Proton acceptor is the glutamate 207. Positions 208, 230, and 321 each coordinate a divalent metal cation.

It belongs to the peptidase M42 family. The cofactor is a divalent metal cation.

This is Putative aminopeptidase MJ0555 from Methanocaldococcus jannaschii (strain ATCC 43067 / DSM 2661 / JAL-1 / JCM 10045 / NBRC 100440) (Methanococcus jannaschii).